We begin with the raw amino-acid sequence, 454 residues long: Probable ECA polymerase (454 aa).

A run of 11 helical transmembrane segments spans residues 3–23 (LGQF…ILTL), 39–59 (FSML…MLVF), 61–81 (FGVA…ATAF), 119–139 (LALV…FLLF), 154–174 (GVAL…VYFL), 180–200 (AWFF…VIVG), 201–221 (GTRA…IVRG), 222–242 (WITL…MFWL), 340–360 (LVVM…GLII), 377–397 (YKAA…IVLA), and 409–429 (VFFC…YWLF).

This sequence belongs to the WzyE family. As to quaternary structure, probably part of a complex composed of WzxE, WzyE and WzzE.

It localises to the cell inner membrane. The protein operates within bacterial outer membrane biogenesis; enterobacterial common antigen biosynthesis. Probably involved in the polymerization of enterobacterial common antigen (ECA) trisaccharide repeat units. This chain is Probable ECA polymerase, found in Yersinia pseudotuberculosis serotype O:1b (strain IP 31758).